We begin with the raw amino-acid sequence, 88 residues long: Large ribosomal subunit protein bL31B (88 aa).

It belongs to the bacterial ribosomal protein bL31 family. Type B subfamily. In terms of assembly, part of the 50S ribosomal subunit.

The chain is Large ribosomal subunit protein bL31B from Leuconostoc citreum (strain KM20).